A 236-amino-acid polypeptide reads, in one-letter code: Mitochondrial coenzyme A diphosphatase NUDT8 (236 aa).

The Nudix hydrolase domain maps to 25–172; the sequence is LRARPASAAV…HFRYTLPVFL (148 aa). At Lys-70 the chain carries N6-succinyllysine. The Nudix box motif lies at 70-91; the sequence is KCDPADQDVVHTALRETREELG. Mg(2+)-binding residues include Glu-85 and Glu-89.

The protein belongs to the Nudix hydrolase family. As to quaternary structure, monomer. The cofactor is Mg(2+). Mn(2+) is required as a cofactor.

It localises to the mitochondrion. The enzyme catalyses an acyl-CoA + H2O = an acyl-4'-phosphopantetheine + adenosine 3',5'-bisphosphate + 2 H(+). It catalyses the reaction CoA + H2O = (R)-4'-phosphopantetheine + adenosine 3',5'-bisphosphate + 2 H(+). It carries out the reaction acetyl-CoA + H2O = S-acetyl-4'-phosphopantetheine + adenosine 3',5'-bisphosphate + 2 H(+). The catalysed reaction is butanoyl-CoA + H2O = S-butanoyl-4'-phosphopantetheine + adenosine 3',5'-bisphosphate + 2 H(+). The enzyme catalyses hexanoyl-CoA + H2O = hexanoyl-4'-phosphopantetheine + adenosine 3',5'-bisphosphate + 2 H(+). It catalyses the reaction octanoyl-CoA + H2O = S-octanoyl-4'-phosphopantetheine + adenosine 3',5'-bisphosphate + 2 H(+). It carries out the reaction propanoyl-CoA + H2O = propanoyl-4'-phosphopantetheine + adenosine 3',5'-bisphosphate + 2 H(+). The catalysed reaction is malonyl-CoA + H2O = malonyl-4'-phosphopantetheine + adenosine 3',5'-bisphosphate + 2 H(+). The enzyme catalyses succinyl-CoA + H2O = succinyl-4'-phosphopantetheine + adenosine 3',5'-bisphosphate + 2 H(+). It catalyses the reaction a 5'-end CoA-ribonucleoside in mRNA + H2O = a 5'-end phospho-adenosine-phospho-ribonucleoside in mRNA + (R)-4'-phosphopantetheine + 2 H(+). Functionally, acyl-CoA diphosphatase that mediates the hydrolysis of a wide range of CoA and CoA esters yielding 3',5'-ADP and the corresponding 4'-phosphopantetheine derivative as products. Hydrolyzes short- and medium-chain acyl-CoAs, exhibiting the highest activity toward free CoA, hexanoyl-CoA, and octanoyl-CoA and the lowest activity against acetyl-CoA. Exhibits decapping activity towards dpCoA-capped RNAs in vitro. This Homo sapiens (Human) protein is Mitochondrial coenzyme A diphosphatase NUDT8 (NUDT8).